Consider the following 508-residue polypeptide: BICD family-like cargo adapter 2 (508 aa).

Over residues 1 to 22 the composition is skewed to low complexity; the sequence is MSSPDGPSFPSGPLSGGASPSG. Disordered regions lie at residues 1 to 27, 132 to 152, and 300 to 351; these read MSSP…EGFF, LGEQ…ALSE, and AHSL…TSLS. Coiled-coil stretches lie at residues 64 to 300 and 353 to 458; these read AAEL…SELA and AEIL…DMQV. The segment covering 135–149 has biased composition (basic and acidic residues); it reads QRSEQQDSGRERARA. Residues 470 to 491 are disordered; it reads KELSASASSSTPRRAAPRFSLR. Residues 473–489 show a composition bias toward low complexity; it reads SASASSSTPRRAAPRFS.

It belongs to the BICDR family. As to quaternary structure, interacts with RAB13.

The chain is BICD family-like cargo adapter 2 (BICDL2) from Homo sapiens (Human).